Here is a 243-residue protein sequence, read N- to C-terminus: Small ribosomal subunit protein uS2 (243 aa).

Belongs to the universal ribosomal protein uS2 family.

The chain is Small ribosomal subunit protein uS2 from Aliivibrio salmonicida (strain LFI1238) (Vibrio salmonicida (strain LFI1238)).